The primary structure comprises 242 residues: uncharacterized protein (242 aa).

Disordered regions lie at residues 16–121 (GLYK…GAMA) and 152–178 (PVRP…TQPV). Composition is skewed to pro residues over residues 50-64 (PRPP…PSPA) and 97-113 (EPRP…PPGP). Over residues 157–172 (KLPKGKGRLRRPRQSR) the composition is skewed to basic residues. The residue at position 175 (Thr-175) is a Phosphothreonine. Ser-192, Ser-206, Ser-216, Ser-232, and Ser-238 each carry phosphoserine. The segment at 215 to 242 (QSLSLQREPLGSCKLRNSLDSSDSDSAL) is disordered. A compositionally biased stretch (low complexity) spans 232-242 (SLDSSDSDSAL).

It localises to the cytoplasm. This is an uncharacterized protein from Rattus norvegicus (Rat).